A 193-amino-acid polypeptide reads, in one-letter code: Ion-translocating oxidoreductase complex subunit A (193 aa).

A run of 6 helical transmembrane segments spans residues 5-25 (LLLF…FLGL), 47-67 (FVMT…LIPL), 72-92 (LRTL…EMVV), 102-122 (LLGI…VALL), 134-154 (ALYG…FAAI), and 171-191 (AIAL…SGLV).

The protein belongs to the NqrDE/RnfAE family. The complex is composed of six subunits: RsxA, RsxB, RsxC, RsxD, RsxE and RsxG.

Its subcellular location is the cell inner membrane. Its function is as follows. Part of a membrane-bound complex that couples electron transfer with translocation of ions across the membrane. Required to maintain the reduced state of SoxR. The polypeptide is Ion-translocating oxidoreductase complex subunit A (Salmonella agona (strain SL483)).